The sequence spans 118 residues: Holo-[acyl-carrier-protein] synthase (118 aa).

Aspartate 8 and glutamate 58 together coordinate Mg(2+).

This sequence belongs to the P-Pant transferase superfamily. AcpS family. The cofactor is Mg(2+).

It localises to the cytoplasm. The enzyme catalyses apo-[ACP] + CoA = holo-[ACP] + adenosine 3',5'-bisphosphate + H(+). Transfers the 4'-phosphopantetheine moiety from coenzyme A to a Ser of acyl-carrier-protein. The polypeptide is Holo-[acyl-carrier-protein] synthase (Streptococcus equi subsp. zooepidemicus (strain MGCS10565)).